The chain runs to 144 residues: Ribosome-binding factor A (144 aa).

Positions 120–144 (DKRRMAESGREEDDAAPDETTEDNA) are disordered. Acidic residues predominate over residues 129-144 (REEDDAAPDETTEDNA).

The protein belongs to the RbfA family. Monomer. Binds 30S ribosomal subunits, but not 50S ribosomal subunits or 70S ribosomes.

It localises to the cytoplasm. Its function is as follows. One of several proteins that assist in the late maturation steps of the functional core of the 30S ribosomal subunit. Associates with free 30S ribosomal subunits (but not with 30S subunits that are part of 70S ribosomes or polysomes). Required for efficient processing of 16S rRNA. May interact with the 5'-terminal helix region of 16S rRNA. The protein is Ribosome-binding factor A of Aeromonas hydrophila subsp. hydrophila (strain ATCC 7966 / DSM 30187 / BCRC 13018 / CCUG 14551 / JCM 1027 / KCTC 2358 / NCIMB 9240 / NCTC 8049).